Consider the following 498-residue polypeptide: Ammonium transporter 1 member 3 (498 aa).

A run of 11 helical transmembrane segments spans residues 41–61, 76–96, 122–142, 150–170, 194–214, 238–258, 277–299, 307–327, 329–349, 362–382, and 414–434; these read LLFS…LCAG, VLDA…FAFG, FFLF…GSIA, YLIY…HWFW, FAGS…GAFI, LVVL…PGSF, AVGR…TLYG, WNVT…TAGC, VVDP…LIGC, LEAT…TALF, and IVQI…LFYV. The disordered stretch occupies residues 473 to 498; that stretch reads RAKSAAETARVEPRKSPEQAAAGQFV.

The protein belongs to the ammonia transporter channel (TC 1.A.11.2) family. Expressed in roots.

It is found in the membrane. Functionally, ammonium transporter probably involved in ammonium uptake from the soil. This Oryza sativa subsp. japonica (Rice) protein is Ammonium transporter 1 member 3 (AMT1-3).